The chain runs to 25 residues: YKVDEDLQGAGGIQSRGYFFFRPRN.

N25 carries the asparagine amide modification.

This sequence belongs to the NmU family.

The protein localises to the secreted. Its function is as follows. Stimulates uterine smooth muscle contraction and causes selective vasoconstriction. This is Neuromedin-U-25 (NMU) from Gallus gallus (Chicken).